A 412-amino-acid polypeptide reads, in one-letter code: Putative odorant receptor 85d (412 aa).

Over 1-56 (MLTKKDTQSAKEQEKLKAIPLHSFLKYANVFYLSIGMMAYDHKYSQKWKEVLLHWT) the chain is Cytoplasmic. Residues 57-77 (FIAQMVNLNTVLISELIYVFL) form a helical membrane-spanning segment. Over 78 to 84 (AIGKGSN) the chain is Extracellular. The chain crosses the membrane as a helical span at residues 85-105 (FLEATMNLSFIGFVIVGDFKI). The Cytoplasmic portion of the chain corresponds to 106-152 (WNISRQRKRLTQVVSRLEELHPQGLAQQEPYNIGHHLSGYSRYSKFY). Residues 153-173 (FGMHMVLIWTYNLYWAVYYLV) form a helical membrane-spanning segment. Residues 174–219 (CDFWLGMRQFERMLPYYCWVPWDWSTGYSYYFMYISQNIGGQACLS) lie on the Extracellular side of the membrane. Residues 220-240 (GQLAADMLMCALVTLVVMHFI) form a helical membrane-spanning segment. Residues 241–282 (RLSAHIESHVAGIGSFQHDLEFLQATVAYHQSLIHLCQDINE) are Cytoplasmic-facing. A helical membrane pass occupies residues 283-303 (IFGVSLLSNFVSSSFIICFVG). Topologically, residues 304-314 (FQMTIGSKIDN) are extracellular. Residues 315–335 (LVMLVLFLFCAMVQVFMIATH) form a helical membrane-spanning segment. At 336–382 (AQRLVDASEQIGQAVYNHDWFRADLRYRKMLILIIKRAQQPSRLKAT) the chain is on the cytoplasmic side. A helical membrane pass occupies residues 383–403 (MFLNISLVTVSDLLQLSYKFF). The Extracellular portion of the chain corresponds to 404–412 (ALLRTMYVN).

Belongs to the insect chemoreceptor superfamily. Heteromeric odorant receptor channel (TC 1.A.69) family. Or49a subfamily. In terms of assembly, interacts with Orco. Complexes exist early in the endomembrane system in olfactory sensory neurons (OSNs), coupling these complexes to the conserved ciliary trafficking pathway. Expressed in olfactory sensory neurons in the maxillary palp.

The protein resides in the cell membrane. Its function is as follows. Odorant receptor which mediates acceptance or avoidance behavior, depending on its substrates. The odorant receptor repertoire encodes a large collection of odor stimuli that vary widely in identity, intensity, and duration. May form a complex with Orco to form odorant-sensing units, providing sensitive and prolonged odorant signaling and calcium permeability. The chain is Putative odorant receptor 85d (Or85d) from Drosophila melanogaster (Fruit fly).